The primary structure comprises 995 residues: Polyprotein nsP1234 (995 aa).

Positions 30 and 32 each coordinate ADP-D-ribose. 4 residues coordinate Zn(2+): C180, C182, C205, and C223. 2 short sequence motifs (FGDF; binding to host G3BP1) span residues 347 to 350 (FGDL) and 364 to 367 (FGDF). The RdRp catalytic domain occupies 749-864 (DAVLETDIAS…HGVKSDKLLA (116 aa)).

As to quaternary structure, interacts with mRNA-capping enzyme nsP1. Interacts with host DDX1. Interacts with host DDX3. Interacts (via C-terminus) with host G3BP1; this interaction inhibits the formation of host stress granules on viral mRNAs and the nsp3-G3BP1 complexes bind viral RNAs and probably orchestrate the assembly of viral replication complexes. Interacts (via C-terminus) with host G3BP2; this interaction inhibits the formation of host stress granules on viral mRNAs and the nsp3-G3BP2 complexes bind viral RNAs and probably orchestrate the assembly of viral replication complexes. Interacts with mRNA-capping enzyme nsP1. Interacts with protease nsP2. interacts with itself. It depends on Mg(2+) as a cofactor. Mn(2+) is required as a cofactor. Post-translationally, polyprotein P1234: Specific enzymatic cleavages in vivo yield mature proteins. The processing of the polyprotein is temporally regulated. In early stages (1.7 hpi), P1234 is first cleaved in trans through its nsP2 protease activity, releasing P123' and nsP4, which associate to form the early replication complex. At the same time, P1234 is also cut at the nsP1/nsP2 site early in infection but with lower efficiency. After replication of the viral minus-strand RNAs (4 hpi), the polyproteins are cut at the nsP1/nsP2 and nsP2/nsP3 sites very efficiently, preventing accumulation of P123' and P1234 and allowing the formation of the late replication complex. NsP3'/nsP4 site is not cleaved anymore and P34 is produced rather than nsP4. In terms of processing, specific enzymatic cleavages in vivo yield mature proteins. The processing of the polyprotein is temporally regulated. In early stages (1.7 hpi), P123 is cleaved at the nsP1/nsP2 site with low efficiency. After replication of the viral minus-strand RNAs (4 hpi), the polyproteins are cut at the nsP1/nsP2 and nsP2/nsP3 sites very efficiently, preventing accumulation of P123 and allowing the formation of the late replication complex. Specific enzymatic cleavages in vivo yield mature proteins. The processing of the polyprotein is temporally regulated. In early stages (1.7 hpi), P123' is cleaved at the nsP1/nsP2 site with low efficiency. After replication of the viral minus-strand RNAs (4 hpi), the polyproteins are cut at the nsP1/nsP2 and nsP2/nsP3 sites very efficiently, preventing accumulation of P123' and allowing the formation of the late replication complex. Post-translationally, phosphorylated by host on serines and threonines. In terms of processing, ubiquitinated; targets the protein for rapid degradation via the ubiquitin system. Nsp4 is present in extremely low quantities due to low frequency of translation through the amber stop-codon and the degradation by the ubiquitin pathway.

The protein resides in the host cytoplasmic vesicle membrane. It carries out the reaction RNA(n) + a ribonucleoside 5'-triphosphate = RNA(n+1) + diphosphate. The enzyme catalyses RNA(n) + ATP = RNA(n)-3'-adenine ribonucleotide + diphosphate. It catalyses the reaction 4-O-(ADP-D-ribosyl)-L-aspartyl-[protein] + H2O = L-aspartyl-[protein] + ADP-D-ribose + H(+). The catalysed reaction is 5-O-(ADP-D-ribosyl)-L-glutamyl-[protein] + H2O = L-glutamyl-[protein] + ADP-D-ribose + H(+). It carries out the reaction ADP-alpha-D-ribose 1''-phosphate + H2O = ADP-D-ribose + phosphate. In terms of biological role, polyprotein P1234: Inactive precursor of the viral replicase, which is activated by cleavages carried out by the viral protease nsP2. Its function is as follows. The early replication complex formed by the polyprotein P123 and nsP4 synthesizes minus-strand RNAs. As soon P123 is cleaved into mature proteins, the plus-strand RNAs synthesis begins. The early replication complex formed by the polyprotein P123' and nsP4 synthesizes minus-strand RNAs. Polyprotein P123' is a short-lived polyprotein that accumulates during early stage of infection. As soon P123' is cleaved into mature proteins, the plus-strand RNAs synthesis begins. Functionally, seems to be essential for minus-strand RNAs and subgenomic 26S mRNAs synthesis. Displays mono-ADP-ribosylhydrolase activity. ADP-ribosylation is a post-translational modification that controls various processes of the host cell and the virus probably needs to revert it for optimal viral replication. Binds proteins of FXR family and sequesters them into the viral RNA replication complexes thereby inhibiting the formation of host stress granules on viral mRNAs. The nsp3'-FXR complexes bind viral RNAs and probably orchestrate the assembly of viral replication complexes, thanks to the ability of FXR family members to self-assemble and bind DNA. In terms of biological role, seems to be essential for minus-strand RNAs and subgenomic 26S mRNAs synthesis. Displays mono-ADP-ribosylhydrolase activity. ADP-ribosylation is a post-translantional modification that controls various processes of the host cell and the virus probably needs to revert it for optimal viral replication. Binds proteins of G3BP family and sequesters them into the viral RNA replication complexes thereby inhibiting the formation of host stress granules on viral mRNAs. The nsp3-G3BP complexes bind viral RNAs and probably orchestrate the assembly of viral replication complexes, thanks to the ability of G3BP family members to self-assemble and bind DNA. Its function is as follows. RNA dependent RNA polymerase. Replicates genomic and antigenomic RNA by recognizing replications specific signals. The early replication complex formed by the polyprotein P123 and nsP4 synthesizes minus-strand RNAs. The late replication complex composed of fully processed nsP1-nsP4 is responsible for the production of genomic and subgenomic plus-strand RNAs. The core catalytic domain of nsP4 also possesses terminal adenylyltransferase (TATase) activity that is probably involved in maintenance and repair of the poly(A) tail, an element required for replication of the viral genome. The polypeptide is Polyprotein nsP1234 (Middelburg virus).